A 445-amino-acid chain; its full sequence is Protein cereblon (445 aa).

Positions Met1–Phe50 are disordered. Over residues Glu23–Asp36 the composition is skewed to acidic residues. Residues Ile82–Thr321 form the Lon N-terminal domain. One can recognise a CULT domain in the interval Cys320–Ile428. Cys325 and Cys328 together coordinate Zn(2+). The (S)-thalidomide site is built by His380, Trp382, and Trp388. Residues Cys393 and Cys396 each coordinate Zn(2+).

Belongs to the CRBN family. Component of a DCX (DDB1-CUL4-X-box) protein ligase complex. Interacts directly with DDB1.

It is found in the cytoplasm. The protein localises to the nucleus. It functions in the pathway protein modification; protein ubiquitination. Its function is as follows. Substrate recognition component of a DCX (DDB1-CUL4-X-box) E3 protein ligase complex that mediates the ubiquitination and subsequent proteasomal degradation of target proteins, such as MEIS2. Normal degradation of key regulatory proteins is required for normal limb outgrowth and expression of the fibroblast growth factor FGF8. Maintains presynaptic glutamate release and consequently cognitive functions, such as memory and learning, by negatively regulating large-conductance calcium-activated potassium (BK) channels in excitatory neurons. Likely to function by regulating the assembly and neuronal surface expression of BK channels via its interaction with KCNT1. May also be involved in regulating anxiety-like behaviors via a BK channel-independent mechanism. The polypeptide is Protein cereblon (CRBN) (Gallus gallus (Chicken)).